The primary structure comprises 319 residues: Cytochrome f (319 aa).

Residues Met1–Ala34 form the signal peptide. Tyr35, Cys55, Cys58, and His59 together coordinate heme. A helical transmembrane segment spans residues Val285–Leu304.

The protein belongs to the cytochrome f family. As to quaternary structure, the 4 large subunits of the cytochrome b6-f complex are cytochrome b6, subunit IV (17 kDa polypeptide, petD), cytochrome f and the Rieske protein, while the 4 small subunits are PetG, PetL, PetM and PetN. The complex functions as a dimer. Requires heme as cofactor.

It is found in the plastid. It localises to the chloroplast thylakoid membrane. In terms of biological role, component of the cytochrome b6-f complex, which mediates electron transfer between photosystem II (PSII) and photosystem I (PSI), cyclic electron flow around PSI, and state transitions. This is Cytochrome f (petA) from Picea abies (Norway spruce).